A 318-amino-acid chain; its full sequence is NADH-ubiquinone oxidoreductase chain 1 (318 aa).

Helical transmembrane passes span 2-22 (PMIN…FLML), 76-96 (ALAL…IPLI), 100-120 (LGLL…LWSG), 146-166 (LALI…SALI), 171-191 (HSWL…STLA), 222-242 (LFFM…TMIF), 253-273 (ELYT…FLWI), and 294-314 (LPLT…TSGI).

It belongs to the complex I subunit 1 family. Core subunit of respiratory chain NADH dehydrogenase (Complex I) which is composed of 45 different subunits.

The protein resides in the mitochondrion inner membrane. It carries out the reaction a ubiquinone + NADH + 5 H(+)(in) = a ubiquinol + NAD(+) + 4 H(+)(out). In terms of biological role, core subunit of the mitochondrial membrane respiratory chain NADH dehydrogenase (Complex I) which catalyzes electron transfer from NADH through the respiratory chain, using ubiquinone as an electron acceptor. Essential for the catalytic activity and assembly of complex I. In Pongo abelii (Sumatran orangutan), this protein is NADH-ubiquinone oxidoreductase chain 1 (MT-ND1).